We begin with the raw amino-acid sequence, 400 residues long: Enoyl-[acyl-carrier-protein] reductase [NADH] (400 aa).

Residues 48–53 (GSSSGY), 74–75 (FE), 111–112 (DA), and 139–140 (LA) each bind NAD(+). Position 225 (Tyr-225) interacts with substrate. Tyr-235 acts as the Proton donor in catalysis. NAD(+) is bound by residues Lys-244 and 273-275 (VVT).

Belongs to the TER reductase family. In terms of assembly, monomer.

It catalyses the reaction a 2,3-saturated acyl-[ACP] + NAD(+) = a (2E)-enoyl-[ACP] + NADH + H(+). Its pathway is lipid metabolism; fatty acid biosynthesis. Functionally, involved in the final reduction of the elongation cycle of fatty acid synthesis (FAS II). Catalyzes the reduction of a carbon-carbon double bond in an enoyl moiety that is covalently linked to an acyl carrier protein (ACP). The sequence is that of Enoyl-[acyl-carrier-protein] reductase [NADH] from Aliivibrio fischeri (strain ATCC 700601 / ES114) (Vibrio fischeri).